Here is a 180-residue protein sequence, read N- to C-terminus: ATP-dependent protease subunit HslV (180 aa).

Residue T7 is part of the active site. Na(+)-binding residues include G163, C166, and T169.

Belongs to the peptidase T1B family. HslV subfamily. A double ring-shaped homohexamer of HslV is capped on each side by a ring-shaped HslU homohexamer. The assembly of the HslU/HslV complex is dependent on binding of ATP.

It localises to the cytoplasm. It catalyses the reaction ATP-dependent cleavage of peptide bonds with broad specificity.. Allosterically activated by HslU binding. Its function is as follows. Protease subunit of a proteasome-like degradation complex believed to be a general protein degrading machinery. This chain is ATP-dependent protease subunit HslV, found in Alcanivorax borkumensis (strain ATCC 700651 / DSM 11573 / NCIMB 13689 / SK2).